The primary structure comprises 219 residues: Cytidylate kinase (219 aa).

21–29 (GPAASGKGT) provides a ligand contact to ATP.

This sequence belongs to the cytidylate kinase family. Type 1 subfamily.

The protein localises to the cytoplasm. The enzyme catalyses CMP + ATP = CDP + ADP. It catalyses the reaction dCMP + ATP = dCDP + ADP. The sequence is that of Cytidylate kinase from Rickettsia conorii (strain ATCC VR-613 / Malish 7).